Reading from the N-terminus, the 876-residue chain is Probable galactinol--sucrose galactosyltransferase 4 (876 aa).

Phosphoserine occurs at positions 7 and 9.

Belongs to the glycosyl hydrolases 36 family.

The catalysed reaction is alpha-D-galactosyl-(1-&gt;3)-1D-myo-inositol + sucrose = raffinose + myo-inositol. Its function is as follows. Transglycosidase operating by a ping-pong reaction mechanism. Involved in the synthesis of raffinose, a major soluble carbohydrate in seeds, roots and tubers. This Arabidopsis thaliana (Mouse-ear cress) protein is Probable galactinol--sucrose galactosyltransferase 4 (RFS4).